We begin with the raw amino-acid sequence, 265 residues long: Orotidine 5'-phosphate decarboxylase (265 aa).

Substrate contacts are provided by residues Asp38, 60–62, 91–100, Tyr213, and Arg232; these read KTH and DRKFADIGNT. The active-site Proton donor is the Lys93.

The protein belongs to the OMP decarboxylase family.

The catalysed reaction is orotidine 5'-phosphate + H(+) = UMP + CO2. Its pathway is pyrimidine metabolism; UMP biosynthesis via de novo pathway; UMP from orotate: step 2/2. This Rhizopus oryzae (Mucormycosis agent) protein is Orotidine 5'-phosphate decarboxylase (pyrG).